The chain runs to 179 residues: Guanosine-3',5'-bis(diphosphate) 3'-pyrophosphohydrolase MESH1 (179 aa).

Gly2 is modified (N-acetylglycine). Lys25 bears the N6-acetyllysine mark. The 96-residue stretch at 32-127 (YINHPIGVAR…VKLADKLYNL (96 aa)) folds into the HD domain. Mn(2+) is bound by residues His35, His61, and Asp62. Residues Glu65 and Asp66 each act as nucleophile in the active site. Lys97 carries the post-translational modification N6-acetyllysine. Asp122 contributes to the Mn(2+) binding site. Lys123 is modified (N6-acetyllysine).

This sequence belongs to the MESH1 family. Mn(2+) serves as cofactor.

The enzyme catalyses guanosine 3',5'-bis(diphosphate) + H2O = GDP + diphosphate + H(+). In terms of biological role, ppGpp hydrolyzing enzyme involved in starvation response. This is Guanosine-3',5'-bis(diphosphate) 3'-pyrophosphohydrolase MESH1 (HDDC3) from Homo sapiens (Human).